We begin with the raw amino-acid sequence, 128 residues long: Aspartate 1-decarboxylase (128 aa).

Ser25 acts as the Schiff-base intermediate with substrate; via pyruvic acid in catalysis. The residue at position 25 (Ser25) is a Pyruvic acid (Ser). A substrate-binding site is contributed by Thr57. Residue Tyr58 is the Proton donor of the active site. Residue 73–75 (GAA) participates in substrate binding.

The protein belongs to the PanD family. In terms of assembly, heterooctamer of four alpha and four beta subunits. Requires pyruvate as cofactor. Is synthesized initially as an inactive proenzyme, which is activated by self-cleavage at a specific serine bond to produce a beta-subunit with a hydroxyl group at its C-terminus and an alpha-subunit with a pyruvoyl group at its N-terminus.

The protein localises to the cytoplasm. It catalyses the reaction L-aspartate + H(+) = beta-alanine + CO2. The protein operates within cofactor biosynthesis; (R)-pantothenate biosynthesis; beta-alanine from L-aspartate: step 1/1. Catalyzes the pyruvoyl-dependent decarboxylation of aspartate to produce beta-alanine. This chain is Aspartate 1-decarboxylase, found in Caldicellulosiruptor saccharolyticus (strain ATCC 43494 / DSM 8903 / Tp8T 6331).